The following is a 214-amino-acid chain: Serine protease inhibitor 2.1 (214 aa).

It belongs to the serpin family.

This Rattus norvegicus (Rat) protein is Serine protease inhibitor 2.1.